Here is a 545-residue protein sequence, read N- to C-terminus: Glucose-6-phosphate isomerase (545 aa).

The Proton donor role is filled by Glu351. Catalysis depends on residues His382 and Lys510.

It belongs to the GPI family.

Its subcellular location is the cytoplasm. It catalyses the reaction alpha-D-glucose 6-phosphate = beta-D-fructose 6-phosphate. Its pathway is carbohydrate biosynthesis; gluconeogenesis. It participates in carbohydrate degradation; glycolysis; D-glyceraldehyde 3-phosphate and glycerone phosphate from D-glucose: step 2/4. Catalyzes the reversible isomerization of glucose-6-phosphate to fructose-6-phosphate. This is Glucose-6-phosphate isomerase from Shewanella baltica (strain OS223).